Here is an 88-residue protein sequence, read N- to C-terminus: Small ribosomal subunit protein uS15c (88 aa).

This sequence belongs to the universal ribosomal protein uS15 family. Part of the 30S ribosomal subunit.

It is found in the plastid. The protein resides in the chloroplast. This chain is Small ribosomal subunit protein uS15c (rps15), found in Marchantia polymorpha (Common liverwort).